Here is a 297-residue protein sequence, read N- to C-terminus: uncharacterized protein (297 aa).

It belongs to the metallo-dependent hydrolases superfamily.

This is an uncharacterized protein from Sinorhizobium fredii (strain NBRC 101917 / NGR234).